A 210-amino-acid chain; its full sequence is Histidine biosynthesis bifunctional protein HisIE (210 aa).

Residues 1 to 106 (MTKYKIDFSK…SCFNTEVPFS (106 aa)) form a phosphoribosyl-AMP cyclohydrolase region. The tract at residues 107–210 (VQTLAQTVQD…KGERQNIEQW (104 aa)) is phosphoribosyl-ATP pyrophosphohydrolase.

The protein in the N-terminal section; belongs to the PRA-CH family. In the C-terminal section; belongs to the PRA-PH family.

It is found in the cytoplasm. It carries out the reaction 1-(5-phospho-beta-D-ribosyl)-ATP + H2O = 1-(5-phospho-beta-D-ribosyl)-5'-AMP + diphosphate + H(+). It catalyses the reaction 1-(5-phospho-beta-D-ribosyl)-5'-AMP + H2O = 1-(5-phospho-beta-D-ribosyl)-5-[(5-phospho-beta-D-ribosylamino)methylideneamino]imidazole-4-carboxamide. The protein operates within amino-acid biosynthesis; L-histidine biosynthesis; L-histidine from 5-phospho-alpha-D-ribose 1-diphosphate: step 2/9. It functions in the pathway amino-acid biosynthesis; L-histidine biosynthesis; L-histidine from 5-phospho-alpha-D-ribose 1-diphosphate: step 3/9. This is Histidine biosynthesis bifunctional protein HisIE (hisI) from Staphylococcus aureus (strain Mu50 / ATCC 700699).